A 289-amino-acid polypeptide reads, in one-letter code: Phosphatidylserine decarboxylase proenzyme (289 aa).

Active-site charge relay system; for autoendoproteolytic cleavage activity residues include aspartate 88, histidine 145, and serine 251. Serine 251 acts as the Schiff-base intermediate with substrate; via pyruvic acid; for decarboxylase activity in catalysis. Pyruvic acid (Ser); by autocatalysis is present on serine 251.

Belongs to the phosphatidylserine decarboxylase family. PSD-B subfamily. Prokaryotic type I sub-subfamily. Heterodimer of a large membrane-associated beta subunit and a small pyruvoyl-containing alpha subunit. The cofactor is pyruvate. In terms of processing, is synthesized initially as an inactive proenzyme. Formation of the active enzyme involves a self-maturation process in which the active site pyruvoyl group is generated from an internal serine residue via an autocatalytic post-translational modification. Two non-identical subunits are generated from the proenzyme in this reaction, and the pyruvate is formed at the N-terminus of the alpha chain, which is derived from the carboxyl end of the proenzyme. The autoendoproteolytic cleavage occurs by a canonical serine protease mechanism, in which the side chain hydroxyl group of the serine supplies its oxygen atom to form the C-terminus of the beta chain, while the remainder of the serine residue undergoes an oxidative deamination to produce ammonia and the pyruvoyl prosthetic group on the alpha chain. During this reaction, the Ser that is part of the protease active site of the proenzyme becomes the pyruvoyl prosthetic group, which constitutes an essential element of the active site of the mature decarboxylase.

The protein localises to the cell membrane. It catalyses the reaction a 1,2-diacyl-sn-glycero-3-phospho-L-serine + H(+) = a 1,2-diacyl-sn-glycero-3-phosphoethanolamine + CO2. Its pathway is phospholipid metabolism; phosphatidylethanolamine biosynthesis; phosphatidylethanolamine from CDP-diacylglycerol: step 2/2. In terms of biological role, catalyzes the formation of phosphatidylethanolamine (PtdEtn) from phosphatidylserine (PtdSer). This chain is Phosphatidylserine decarboxylase proenzyme, found in Polaromonas naphthalenivorans (strain CJ2).